The primary structure comprises 507 residues: Glycerol kinase (507 aa).

Thr13 contributes to the ADP binding site. Thr13, Thr14, and Ser15 together coordinate ATP. Residue Thr13 coordinates sn-glycerol 3-phosphate. Arg17 provides a ligand contact to ADP. 4 residues coordinate sn-glycerol 3-phosphate: Arg83, Glu84, Tyr135, and Asp245. The glycerol site is built by Arg83, Glu84, Tyr135, Asp245, and Gln246. The ADP site is built by Thr267 and Gly310. Residues Thr267, Gly310, Gln314, and Gly411 each coordinate ATP. The ADP site is built by Gly411 and Asn415.

This sequence belongs to the FGGY kinase family.

The catalysed reaction is glycerol + ATP = sn-glycerol 3-phosphate + ADP + H(+). The protein operates within polyol metabolism; glycerol degradation via glycerol kinase pathway; sn-glycerol 3-phosphate from glycerol: step 1/1. With respect to regulation, inhibited by fructose 1,6-bisphosphate (FBP). In terms of biological role, key enzyme in the regulation of glycerol uptake and metabolism. Catalyzes the phosphorylation of glycerol to yield sn-glycerol 3-phosphate. The chain is Glycerol kinase from Halorhodospira halophila (strain DSM 244 / SL1) (Ectothiorhodospira halophila (strain DSM 244 / SL1)).